A 1069-amino-acid chain; its full sequence is MESFEGEGDSIQSPDNARGDDVQNTGEHIQDPGPGPSTGGASEGLVQNEPDSRDQQSRGQRRGDENRGWMQRIRRRRRRRAALSGHLLDMEDNVPPWFPPHDITPYVARNIRDAACQAVKHSHLQALSNLILDSGLDTQHLLCFVMAARQRLQDIRRGPLVVEGGVGWRHWLLTSPSRSWSMGYRTATLRTLTPVPNRVGADSIMLTATFGCQNGALAINTFSATVWIPPPAGPREQERYAREAEVRFLRGKWQRRFRRIFDLIELCGSLHHVWQNMLQTEENLLDFVRFMGVMSSCNSSSVNYWFHKTIGNFKPYYPWNAPPNENPYHARRGIKEQVIQKAFLKAQRQGLSMLATGGGPRGDATSETSSDEDTGRQGSDVELESSDDELPYIDPNMEPVQQRPVMFVSRVPVRKPRTLPWPTPKTHPVKRTIVKTSYRSDEAEEAQSTPERPGPSKQPSEPVEPAHTTPAGRSTVILHEPPREPEAVSFKPPPPPSRRRRGACVVYDDDIIEVIDVETTEEETTSMQRQPPLGQQPPPPVISTGSAMSSSHTDPSVTQPSKPHRKPQDGFQRSGRRQKRAMPPPVSPSDAGPPSTRPRVMAPPSTGPRVMATPSTGPRDMAPPSTGPRDMAPPSTGPRDMAPPSTGPRDMAPTVVHMFTRERLLTQSTGPAPRSFWEMRAGRDAPKIQQEPSSQQQPATQSTPPCQSWVPSVYVLPAVDAGNAQPLQISHLSSMSPTQPISHEEQPRYEDPDTPLDLSLHPDTATLPPTQDLYPGREDLQATQAPYPGYEEPRPPQAPFVGDYGFVQIPSAQWEPHPSQGTYQGHIDPQLPAALDLGPEQPRFPQDPYVYSGGQLSSCPGYAGPWPSRPQHPRYRHTLALWPREPRHGHSQGPWKPWSAHLPPQWDGSAGHGQDQVSQFPHLHSETGPPRLQLSSVPQVLYPQPLVSSSAPSWSSPQPRAPIRPIPTRFPPPPMPLQDSMAVGCDSSGTACPSMPFASDYSQGAFTPLDINAPTPKSPRVEESSHGPARCSQATSEAQEILSDNSEISVFPKDAKQTDYDASTESELD.

Disordered regions lie at residues 1–75 (MESF…RIRR), 353–708 (MLAT…PCQS), 733–776 (SSMS…LYPG), 884–932 (REPR…PPRL), and 1008–1069 (PLDI…SELD). Residues 50 to 67 (PDSRDQQSRGQRRGDENR) are compositionally biased toward basic and acidic residues. Acidic residues-rich tracts occupy residues 381–391 (VELESSDDELP) and 507–524 (YDDD…EEET). Residues 543-561 (STGSAMSSSHTDPSVTQPS) are compositionally biased toward polar residues. Residues 689-708 (QQEPSSQQQPATQSTPPCQS) show a composition bias toward low complexity. The span at 742–751 (SHEEQPRYED) shows a compositional bias: basic and acidic residues. A compositionally biased stretch (polar residues) spans 1032-1048 (SQATSEAQEILSDNSEI).

Belongs to the herpesviridae EBNA-6 family. In terms of assembly, interacts with host CTPB1; this interaction leads to gene repression, but also seems to interfere with the repressive function of CtBP pre-bound to DNA, leading to EBNA6 mediated up-regulation of many host genes. Interacts with host MYC; this interaction enhances MYC stability. Interacts (via N-terminus) with host RBPJ. Interacts (via N-terminus) with host histone H2AX; this interaction facilitates H2AX proteasomal degradation. Interacts with host TP73; this interaction inhibits TP73-mediated apoptotic pathway. Interacts (via N-terminus) with host PIM1; this interaction upregulates and stabilizes PIM1 and induces cell proliferation by inhibiting the growth suppressive properties of p21.

The protein localises to the host nucleus. It localises to the host nucleus matrix. In terms of biological role, plays an essential role for the activation and immortalization of human B-cells. Represses transcription of viral promoters TP1 and Cp through interaction with host RBPJ, and inhibits EBNA2-mediated activation of these promoters. Targets host chromatin through interactions with host transcription factors, especially RBPJ and IRF4. Alternatively, EBNA6 also regulates the transcription of the EBV oncogene LMP1 in a cell cycle-dependent manner. Modulates the activity of several host proteins involved in cell cycle regulation including host cyclin A, MYC, RB, p21 and p27 mainly through binding to the host SCF(SKP2) complex. Inhibits the promoter of host H2AX and targets H2AX to proteasomal degradation in order to promote latency and cell proliferation. Upregulates host PIM1 expression and stabilization. Potentiates PIM1 to promote cell proliferation by inhibiting the growth suppressive properties of p21. The polypeptide is Epstein-Barr nuclear antigen 6 (EBNA6) (Epstein-Barr virus (strain AG876) (HHV-4)).